Reading from the N-terminus, the 107-residue chain is uncharacterized protein (107 aa).

The N-terminal stretch at 1 to 18 is a signal peptide; sequence MRTLMLIILSILIYLSSA.

This is an uncharacterized protein from Caenorhabditis elegans.